The chain runs to 297 residues: Hydroxysqualene synthase (297 aa).

Belongs to the phytoene/squalene synthase family. HpnC subfamily.

The catalysed reaction is presqualene diphosphate + H2O = hydroxysqualene + diphosphate. It functions in the pathway secondary metabolite biosynthesis; hopanoid biosynthesis. Involved in the biosynthesis of the hopanoid precursor squalene (SQ) from farnesyl diphosphate (FPP). Catalyzes the second step, the conversion of presqualene diphosphate (PSPP) to hydroxysqualene (HSQ). The sequence is that of Hydroxysqualene synthase from Zymomonas mobilis subsp. mobilis (strain ATCC 31821 / ZM4 / CP4).